We begin with the raw amino-acid sequence, 701 residues long: Elongation factor G (701 aa).

Residues 8-291 enclose the tr-type G domain; sequence SRYRNIGIVA…AVIDYLPAPI (284 aa). Residues 17–24, 89–93, and 143–146 contribute to the GTP site; these read AHVDAGKT, DTPGH, and NKMD.

Belongs to the TRAFAC class translation factor GTPase superfamily. Classic translation factor GTPase family. EF-G/EF-2 subfamily.

It localises to the cytoplasm. In terms of biological role, catalyzes the GTP-dependent ribosomal translocation step during translation elongation. During this step, the ribosome changes from the pre-translocational (PRE) to the post-translocational (POST) state as the newly formed A-site-bound peptidyl-tRNA and P-site-bound deacylated tRNA move to the P and E sites, respectively. Catalyzes the coordinated movement of the two tRNA molecules, the mRNA and conformational changes in the ribosome. This Pseudomonas syringae pv. tomato (strain ATCC BAA-871 / DC3000) protein is Elongation factor G.